A 406-amino-acid polypeptide reads, in one-letter code: Homocitrate synthase AksA (406 aa).

One can recognise a Pyruvate carboxyltransferase domain in the interval 32–285 (IYIYDTTLRD…DLGLNLEVLP (254 aa)).

This sequence belongs to the alpha-IPM synthase/homocitrate synthase family.

The enzyme catalyses acetyl-CoA + 2-oxoglutarate + H2O = (2R)-homocitrate + CoA + H(+). It carries out the reaction 2-oxoadipate + acetyl-CoA + H2O = (R)-dihomocitrate + CoA + H(+). It catalyses the reaction 2-oxoheptanedioate + acetyl-CoA + H2O = (R)-trihomocitrate + CoA + H(+). It functions in the pathway organic acid metabolism; 2-oxosuberate biosynthesis. Its function is as follows. Catalyzes the condensation of alpha-ketoglutarate and acetyl-CoA to form (R)-homocitrate. Can also catalyze the condensation of alpha-ketoadipate with acetyl-CoA to form (R)-homo(2)citrate, and the condensation of alpha-ketopimelate with acetyl-CoA to form (R)-homo(3)citrate. These reactions are part of the biosynthesis pathway of coenzyme B and biotin. This is Homocitrate synthase AksA (aksA) from Methanocaldococcus jannaschii (strain ATCC 43067 / DSM 2661 / JAL-1 / JCM 10045 / NBRC 100440) (Methanococcus jannaschii).